A 356-amino-acid polypeptide reads, in one-letter code: Phosphoribosylformylglycinamidine cyclo-ligase (356 aa).

It belongs to the AIR synthase family.

It is found in the cytoplasm. The enzyme catalyses 2-formamido-N(1)-(5-O-phospho-beta-D-ribosyl)acetamidine + ATP = 5-amino-1-(5-phospho-beta-D-ribosyl)imidazole + ADP + phosphate + H(+). The protein operates within purine metabolism; IMP biosynthesis via de novo pathway; 5-amino-1-(5-phospho-D-ribosyl)imidazole from N(2)-formyl-N(1)-(5-phospho-D-ribosyl)glycinamide: step 2/2. The protein is Phosphoribosylformylglycinamidine cyclo-ligase of Desulfotalea psychrophila (strain LSv54 / DSM 12343).